We begin with the raw amino-acid sequence, 79 residues long: RNA-binding protein Hfq (79 aa).

Residues 10-69 (GPFLNALRKEHVPVSIYLVNGIKLQGNIESFDQYVVLLRNTVTQMVYKHAISTVVPARAV) enclose the Sm domain.

This sequence belongs to the Hfq family. In terms of assembly, homohexamer.

Its function is as follows. RNA chaperone that binds small regulatory RNA (sRNAs) and mRNAs to facilitate mRNA translational regulation in response to envelope stress, environmental stress and changes in metabolite concentrations. Also binds with high specificity to tRNAs. The sequence is that of RNA-binding protein Hfq from Cupriavidus necator (strain ATCC 17699 / DSM 428 / KCTC 22496 / NCIMB 10442 / H16 / Stanier 337) (Ralstonia eutropha).